Here is a 1462-residue protein sequence, read N- to C-terminus: Gag-Pol polyprotein (1462 aa).

The N-myristoyl glycine; by host moiety is linked to residue Gly-2. Residues 7–31 (VLRGKKADELEKVRLRPNGKKRYRL) form an interaction with Gp41 region. The Nuclear export signal motif lies at 16–22 (LEKVRLR). Positions 26-32 (KKRYRLK) match the Nuclear localization signal motif. Residues 191-228 (NCVGDHQAAMQIIREIINEEAADWDAQHPIPGPLPAGQ) form an interaction with human PPIA/CYPA and NUP153 region. The segment at 279-365 (YNPTNILDVK…GGPSQKARLM (87 aa)) is dimerization/Multimerization of capsid protein p24. 2 consecutive CCHC-type zinc fingers follow at residues 389 to 406 (IRCW…QCRA) and 410 to 427 (QGCW…NCPE). Residues 433–509 (LDGPTGKAAP…DAPQRGDRGL (77 aa)) form a disordered region. A compositionally biased stretch (polar residues) spans 448–465 (PSSSGADTNSTPNRSSSG). 2 stretches are compositionally biased toward basic and acidic residues: residues 472-482 (AAREKAERAEG) and 497-507 (AGRDAPQRGDR). A dimerization of protease region spans residues 512–516 (PQFSL). Positions 532–601 (EVLLDTGADD…PINIFGRNIL (70 aa)) constitute a Peptidase A2 domain. The active-site For protease activity; shared with dimeric partner is Asp-536. Dimerization of protease regions lie at residues 560–566 (GIGGFIN) and 599–611 (NILA…LNLP). Residues 655-845 (GQLEEAPPTN…PFQWMGYELW (191 aa)) form the Reverse transcriptase domain. Mg(2+) contacts are provided by Asp-720, Asp-795, and Asp-796. The interval 837–845 (FQWMGYELW) is RT 'primer grip'. The short motif at 1007-1023 (WEQWWDNYWQVTWVPEW) is the Tryptophan repeat motif element. The 124-residue stretch at 1043-1166 (IPGTETFYTD…VDHLVSQGIR (124 aa)) folds into the RNase H type-1 domain. Asp-1052, Glu-1087, Asp-1107, and Asp-1158 together coordinate Mg(2+). The segment at 1172-1213 (EKIEPAQEEHEKYHSNIKELTHKFGIPQLVARQIVNTCAQCQ) adopts an Integrase-type zinc-finger fold. Zn(2+) contacts are provided by His-1181, His-1185, Cys-1209, and Cys-1212. In terms of domain architecture, Integrase catalytic spans 1223-1374 (VNAEIGVWQM…PAERLINMIT (152 aa)). Mg(2+)-binding residues include Asp-1233, Asp-1285, and Glu-1321. A DNA-binding region (integrase-type) is located at residues 1392–1439 (FQVYYREGRDQLWKGPGELLWKGDGAVIVKVGADIKVVPRRKAKIIRD).

In terms of assembly, homotrimer; further assembles as hexamers of trimers. Interacts with gp41 (via C-terminus). Interacts with host CALM1; this interaction induces a conformational change in the Matrix protein, triggering exposure of the myristate group. Interacts with host AP3D1; this interaction allows the polyprotein trafficking to multivesicular bodies during virus assembly. Part of the pre-integration complex (PIC) which is composed of viral genome, matrix protein, Vpr and integrase. Homodimer; the homodimer further multimerizes as homohexamers or homopentamers. Interacts with human PPIA/CYPA. Interacts with human NUP153. Interacts with host PDZD8; this interaction stabilizes the capsid. Interacts with monkey TRIM5; this interaction destabilizes the capsid. As to quaternary structure, homodimer, whose active site consists of two apposed aspartic acid residues. In terms of assembly, heterodimer of p66 RT and p51 RT (RT p66/p51). Heterodimerization of RT is essential for DNA polymerase activity. The overall folding of the subdomains is similar in p66 RT and p51 RT but the spatial arrangements of the subdomains are dramatically different. Homotetramer; may further associate as a homohexadecamer. Part of the pre-integration complex (PIC) which is composed of viral genome, matrix protein, Vpr and integrase. Interacts with human SMARCB1/INI1 and human PSIP1/LEDGF isoform 1. Interacts with human KPNA3; this interaction might play a role in nuclear import of the pre-integration complex. Interacts with human NUP153; this interaction might play a role in nuclear import of the pre-integration complex. Mg(2+) is required as a cofactor. In terms of processing, specific enzymatic cleavages by the viral protease yield mature proteins. The protease is released by autocatalytic cleavage. The polyprotein is cleaved during and after budding, this process is termed maturation. Proteolytic cleavage of p66 RT removes the RNase H domain to yield the p51 RT subunit. Nucleocapsid protein p7 might be further cleaved after virus entry.

It is found in the host cell membrane. The protein localises to the host endosome. It localises to the host multivesicular body. The protein resides in the virion membrane. Its subcellular location is the host nucleus. It is found in the host cytoplasm. The protein localises to the virion. It catalyses the reaction Endopeptidase for which the P1 residue is preferably hydrophobic.. The catalysed reaction is Endohydrolysis of RNA in RNA/DNA hybrids. Three different cleavage modes: 1. sequence-specific internal cleavage of RNA. Human immunodeficiency virus type 1 and Moloney murine leukemia virus enzymes prefer to cleave the RNA strand one nucleotide away from the RNA-DNA junction. 2. RNA 5'-end directed cleavage 13-19 nucleotides from the RNA end. 3. DNA 3'-end directed cleavage 15-20 nucleotides away from the primer terminus.. The enzyme catalyses 3'-end directed exonucleolytic cleavage of viral RNA-DNA hybrid.. It carries out the reaction DNA(n) + a 2'-deoxyribonucleoside 5'-triphosphate = DNA(n+1) + diphosphate. With respect to regulation, protease: The viral protease is inhibited by many synthetic protease inhibitors (PIs), such as amprenavir, atazanavir, indinavir, loprinavir, nelfinavir, ritonavir and saquinavir. Use of protease inhibitors in tritherapy regimens permit more ambitious therapeutic strategies. Reverse transcriptase/ribonuclease H: RT can be inhibited either by nucleoside RT inhibitors (NRTIs) or by non nucleoside RT inhibitors (NNRTIs). NRTIs act as chain terminators, whereas NNRTIs inhibit DNA polymerization by binding a small hydrophobic pocket near the RT active site and inducing an allosteric change in this region. Classical NRTIs are abacavir, adefovir (PMEA), didanosine (ddI), lamivudine (3TC), stavudine (d4T), tenofovir (PMPA), zalcitabine (ddC), and zidovudine (AZT). Classical NNRTIs are atevirdine (BHAP U-87201E), delavirdine, efavirenz (DMP-266), emivirine (I-EBU), and nevirapine (BI-RG-587). The tritherapies used as a basic effective treatment of AIDS associate two NRTIs and one NNRTI. Functionally, mediates, with Gag polyprotein, the essential events in virion assembly, including binding the plasma membrane, making the protein-protein interactions necessary to create spherical particles, recruiting the viral Env proteins, and packaging the genomic RNA via direct interactions with the RNA packaging sequence (Psi). Gag-Pol polyprotein may regulate its own translation, by the binding genomic RNA in the 5'-UTR. At low concentration, the polyprotein would promote translation, whereas at high concentration, the polyprotein would encapsidate genomic RNA and then shut off translation. In terms of biological role, targets the polyprotein to the plasma membrane via a multipartite membrane-binding signal, that includes its myristoylated N-terminus. Matrix protein is part of the pre-integration complex. Implicated in the release from host cell mediated by Vpu. Binds to RNA. Its function is as follows. Forms the conical core that encapsulates the genomic RNA-nucleocapsid complex in the virion. Most core are conical, with only 7% tubular. The core is constituted by capsid protein hexamer subunits. The core is disassembled soon after virion entry. Host restriction factors such as TRIM5-alpha or TRIMCyp bind retroviral capsids and cause premature capsid disassembly, leading to blocks in reverse transcription. Capsid restriction by TRIM5 is one of the factors which restricts HIV-1 to the human species. Host PIN1 apparently facilitates the virion uncoating. On the other hand, interactions with PDZD8 or CYPA stabilize the capsid. Encapsulates and protects viral dimeric unspliced genomic RNA (gRNA). Binds these RNAs through its zinc fingers. Acts as a nucleic acid chaperone which is involved in rearangement of nucleic acid secondary structure during gRNA retrotranscription. Also facilitates template switch leading to recombination. As part of the polyprotein, participates in gRNA dimerization, packaging, tRNA incorporation and virion assembly. Functionally, aspartyl protease that mediates proteolytic cleavages of Gag and Gag-Pol polyproteins during or shortly after the release of the virion from the plasma membrane. Cleavages take place as an ordered, step-wise cascade to yield mature proteins. This process is called maturation. Displays maximal activity during the budding process just prior to particle release from the cell. Also cleaves Nef and Vif, probably concomitantly with viral structural proteins on maturation of virus particles. Hydrolyzes host EIF4GI and PABP1 in order to shut off the capped cellular mRNA translation. The resulting inhibition of cellular protein synthesis serves to ensure maximal viral gene expression and to evade host immune response. In terms of biological role, multifunctional enzyme that converts the viral RNA genome into dsDNA in the cytoplasm, shortly after virus entry into the cell. This enzyme displays a DNA polymerase activity that can copy either DNA or RNA templates, and a ribonuclease H (RNase H) activity that cleaves the RNA strand of RNA-DNA heteroduplexes in a partially processive 3' to 5' endonucleasic mode. Conversion of viral genomic RNA into dsDNA requires many steps. A tRNA(3)-Lys binds to the primer-binding site (PBS) situated at the 5'-end of the viral RNA. RT uses the 3' end of the tRNA primer to perform a short round of RNA-dependent minus-strand DNA synthesis. The reading proceeds through the U5 region and ends after the repeated (R) region which is present at both ends of viral RNA. The portion of the RNA-DNA heteroduplex is digested by the RNase H, resulting in a ssDNA product attached to the tRNA primer. This ssDNA/tRNA hybridizes with the identical R region situated at the 3' end of viral RNA. This template exchange, known as minus-strand DNA strong stop transfer, can be either intra- or intermolecular. RT uses the 3' end of this newly synthesized short ssDNA to perform the RNA-dependent minus-strand DNA synthesis of the whole template. RNase H digests the RNA template except for two polypurine tracts (PPTs) situated at the 5'-end and near the center of the genome. It is not clear if both polymerase and RNase H activities are simultaneous. RNase H probably can proceed both in a polymerase-dependent (RNA cut into small fragments by the same RT performing DNA synthesis) and a polymerase-independent mode (cleavage of remaining RNA fragments by free RTs). Secondly, RT performs DNA-directed plus-strand DNA synthesis using the PPTs that have not been removed by RNase H as primers. PPTs and tRNA primers are then removed by RNase H. The 3' and 5' ssDNA PBS regions hybridize to form a circular dsDNA intermediate. Strand displacement synthesis by RT to the PBS and PPT ends produces a blunt ended, linear dsDNA copy of the viral genome that includes long terminal repeats (LTRs) at both ends. Its function is as follows. Catalyzes viral DNA integration into the host chromosome, by performing a series of DNA cutting and joining reactions. This enzyme activity takes place after virion entry into a cell and reverse transcription of the RNA genome in dsDNA. The first step in the integration process is 3' processing. This step requires a complex comprising the viral genome, matrix protein, Vpr and integrase. This complex is called the pre-integration complex (PIC). The integrase protein removes 2 nucleotides from each 3' end of the viral DNA, leaving recessed CA OH's at the 3' ends. In the second step, the PIC enters cell nucleus. This process is mediated through integrase and Vpr proteins, and allows the virus to infect a non dividing cell. This ability to enter the nucleus is specific of lentiviruses, other retroviruses cannot and rely on cell division to access cell chromosomes. In the third step, termed strand transfer, the integrase protein joins the previously processed 3' ends to the 5' ends of strands of target cellular DNA at the site of integration. The 5'-ends are produced by integrase-catalyzed staggered cuts, 5 bp apart. A Y-shaped, gapped, recombination intermediate results, with the 5'-ends of the viral DNA strands and the 3' ends of target DNA strands remaining unjoined, flanking a gap of 5 bp. The last step is viral DNA integration into host chromosome. This involves host DNA repair synthesis in which the 5 bp gaps between the unjoined strands are filled in and then ligated. Since this process occurs at both cuts flanking the HIV genome, a 5 bp duplication of host DNA is produced at the ends of HIV-1 integration. Alternatively, Integrase may catalyze the excision of viral DNA just after strand transfer, this is termed disintegration. The polypeptide is Gag-Pol polyprotein (gag-pol) (Human immunodeficiency virus type 2 subtype A (isolate D194) (HIV-2)).